Here is a 398-residue protein sequence, read N- to C-terminus: Acetate kinase (398 aa).

Asparagine 8 contacts Mg(2+). Lysine 15 serves as a coordination point for ATP. Position 89 (arginine 89) interacts with substrate. The active-site Proton donor/acceptor is the aspartate 146. ATP-binding positions include 206–210 (HIGNG), 283–285 (DMR), and 331–335 (GMGEN). A Mg(2+)-binding site is contributed by glutamate 383.

This sequence belongs to the acetokinase family. In terms of assembly, homodimer. Mg(2+) serves as cofactor. It depends on Mn(2+) as a cofactor.

It localises to the cytoplasm. It catalyses the reaction acetate + ATP = acetyl phosphate + ADP. The protein operates within metabolic intermediate biosynthesis; acetyl-CoA biosynthesis; acetyl-CoA from acetate: step 1/2. In terms of biological role, catalyzes the formation of acetyl phosphate from acetate and ATP. Can also catalyze the reverse reaction. In Streptococcus pyogenes serotype M6 (strain ATCC BAA-946 / MGAS10394), this protein is Acetate kinase.